Here is a 442-residue protein sequence, read N- to C-terminus: Probable folate-biopterin transporter 7 (442 aa).

The next 12 helical transmembrane spans lie at 23-43 (LGFG…ANFF), 64-82 (LPMV…VYFF), 87-107 (IPYI…IAFL), 114-134 (ILAL…VEVA), 158-178 (FVWM…GIAI), 184-204 (QSTF…TINI), 241-261 (IAWI…MFFY), 270-290 (ASLL…WGFA), 302-322 (KLLT…LLFV), 335-355 (VYVL…ILPF), 379-399 (IALA…FVGV), and 410-430 (GLAI…WIYD).

The protein belongs to the major facilitator superfamily. Folate-biopterin transporter (TC 2.A.71) family.

The protein localises to the membrane. Functionally, could mediate folate transport. The chain is Probable folate-biopterin transporter 7 from Arabidopsis thaliana (Mouse-ear cress).